A 130-amino-acid chain; its full sequence is uncharacterized protein (130 aa).

This is an uncharacterized protein from Sinorhizobium fredii (strain NBRC 101917 / NGR234).